Here is a 256-residue protein sequence, read N- to C-terminus: Small ribosomal subunit protein eS1A (256 aa).

At Ala2 the chain carries N-acetylalanine; partial.

It belongs to the eukaryotic ribosomal protein eS1 family. As to quaternary structure, component of the small ribosomal subunit. Mature ribosomes consist of a small (40S) and a large (60S) subunit. The 40S subunit contains about 33 different proteins and 1 molecule of RNA (18S). The 60S subunit contains about 49 different proteins and 3 molecules of RNA (25S, 5.8S and 5S).

It localises to the cytoplasm. In Scheffersomyces stipitis (strain ATCC 58785 / CBS 6054 / NBRC 10063 / NRRL Y-11545) (Yeast), this protein is Small ribosomal subunit protein eS1A.